Here is a 321-residue protein sequence, read N- to C-terminus: CRISPR-associated aCascade subunit Cas7/Csa2 2 (321 aa).

It belongs to the CRISPR-associated protein Cas7/Cst2/DevR family. Subtype I-a/Apern subfamily. As to quaternary structure, part of the aCascade ribonucleoprotein complex, minimally composed of Csa2 and Cas5a, which binds crRNA. Other possible components of aCascade in strain P1 are Cas6b (SSO1437) and Csa5 (SSO1443), while SSO1399, Cas5b (SSO1400) and SSO1401 have sometimes been seen weakly associated. Csa2 is probably the major RNA-binding subunit. The Csa2-Cas5a-crRNA complex also binds target DNA homologous to crRNA, probably forming an R-loop. Purified aCascade forms a filament about 6 nm in width.

Functionally, CRISPR (clustered regularly interspaced short palindromic repeat) is an adaptive immune system that provides protection against mobile genetic elements (viruses, transposable elements and conjugative plasmids). CRISPR clusters contain spacers, sequences complementary to antecedent mobile elements, and target invading nucleic acids. CRISPR clusters are transcribed and processed into CRISPR RNA (crRNA). This Saccharolobus solfataricus (strain ATCC 35092 / DSM 1617 / JCM 11322 / P2) (Sulfolobus solfataricus) protein is CRISPR-associated aCascade subunit Cas7/Csa2 2 (csa2b).